The sequence spans 241 residues: Nopaline transport system permease protein NocM (241 aa).

The region spanning 17 to 215 is the ABC transmembrane type-1 domain; that stretch reads VPTTLTLAFI…FITFVVSRLV (199 aa). 5 consecutive transmembrane segments (helical) span residues 21–41, 52–72, 95–115, 161–181, and 191–211; these read LTLAFISLLIGFVVSVPVALM, LAYGYVYIIRSTPLLVQMFLI, PWFCAILALALNTAAYTSEII, VMLIIKSTSLASTITIVEVTG, and YSPVEVFIVAGAIYLFITFVV.

It belongs to the binding-protein-dependent transport system permease family. HisMQ subfamily.

Its subcellular location is the cell inner membrane. Functionally, component of the nopaline active transport system probably consisting of four subunits: Q, M, P and T. This system is also capable of transporting octopine provided that catabolic functions are induced with nopaline. This chain is Nopaline transport system permease protein NocM (nocM), found in Agrobacterium fabrum (strain C58 / ATCC 33970) (Agrobacterium tumefaciens (strain C58)).